Consider the following 306-residue polypeptide: S-methyl-5'-thioadenosine phosphorylase (306 aa).

Residues Thr-21, 63–64 (RH), and 96–97 (SA) each bind phosphate. Met-198 is a binding site for substrate. A phosphate-binding site is contributed by Ser-199. Residue 222–224 (DYD) participates in substrate binding.

It belongs to the PNP/MTAP phosphorylase family. MTAP subfamily. As to quaternary structure, homotrimer.

It localises to the cytoplasm. The protein resides in the nucleus. It catalyses the reaction S-methyl-5'-thioadenosine + phosphate = 5-(methylsulfanyl)-alpha-D-ribose 1-phosphate + adenine. It participates in amino-acid biosynthesis; L-methionine biosynthesis via salvage pathway; S-methyl-5-thio-alpha-D-ribose 1-phosphate from S-methyl-5'-thioadenosine (phosphorylase route): step 1/1. In terms of biological role, catalyzes the reversible phosphorylation of S-methyl-5'-thioadenosine (MTA) to adenine and 5-methylthioribose-1-phosphate. Involved in the breakdown of MTA, a major by-product of polyamine biosynthesis. Responsible for the first step in the methionine salvage pathway after MTA has been generated from S-adenosylmethionine. Has broad substrate specificity with 6-aminopurine nucleosides as preferred substrates. The polypeptide is S-methyl-5'-thioadenosine phosphorylase (Sclerotinia sclerotiorum (strain ATCC 18683 / 1980 / Ss-1) (White mold)).